The primary structure comprises 345 residues: Protein phosphatase 1 regulatory subunit 7 (345 aa).

The segment at 1–53 (MATLSVGEPQEMEVDRRGESEESGDDETKRKSLNGEVDSLQAPSTVPEESPVD) is disordered. Residues 13–30 (EVDRRGESEESGDDETKR) show a composition bias toward basic and acidic residues. LRR repeat units lie at residues 62-83 (EEEDVDLVHCRIGKIEGLEVLL), 84-105 (KAKTISLRQNLIKRIENLESLV), 106-127 (SLRELDLYDNQIRKLENLQALT), 128-149 (ELEQLDVSFNLLRKIEGLDSLT), 150-171 (KVKKLFLLHNKIASIANLDHLT), 172-193 (SLQMLELGSNRIRVIENLDSLS), 194-215 (SLESLFLGTNKITQLQNLDGLH), 216-237 (NLTVLSIQSNRITKLEGLQNLV), 238-259 (NLRELYLSHNGIEVMEGLENNK), 260-281 (KLSTLDIAANRIKKIENISHLT), and 282-303 (DLKEFWMNDNQIENWADLDELK). One can recognise an LRRCT domain in the interval 316–345 (NPLQKDPQYRRKIMLALPSVRQIDATFIRF).

The protein belongs to the SDS22 family.

Its subcellular location is the nucleus. Functionally, regulatory subunit of protein phosphatase 1. The sequence is that of Protein phosphatase 1 regulatory subunit 7 (ppp1r7) from Danio rerio (Zebrafish).